A 370-amino-acid polypeptide reads, in one-letter code: tRNA 2-selenouridine synthase (370 aa).

In terms of domain architecture, Rhodanese spans 12-136 (FLDDVPMMDM…MRTFLLETTQ (125 aa)). Cysteine 95 (S-selanylcysteine intermediate) is an active-site residue.

Belongs to the SelU family. As to quaternary structure, monomer.

It catalyses the reaction 5-methylaminomethyl-2-thiouridine(34) in tRNA + selenophosphate + (2E)-geranyl diphosphate + H2O + H(+) = 5-methylaminomethyl-2-selenouridine(34) in tRNA + (2E)-thiogeraniol + phosphate + diphosphate. It carries out the reaction 5-methylaminomethyl-2-thiouridine(34) in tRNA + (2E)-geranyl diphosphate = 5-methylaminomethyl-S-(2E)-geranyl-thiouridine(34) in tRNA + diphosphate. The enzyme catalyses 5-methylaminomethyl-S-(2E)-geranyl-thiouridine(34) in tRNA + selenophosphate + H(+) = 5-methylaminomethyl-2-(Se-phospho)selenouridine(34) in tRNA + (2E)-thiogeraniol. The catalysed reaction is 5-methylaminomethyl-2-(Se-phospho)selenouridine(34) in tRNA + H2O = 5-methylaminomethyl-2-selenouridine(34) in tRNA + phosphate. In terms of biological role, involved in the post-transcriptional modification of the uridine at the wobble position (U34) of tRNA(Lys), tRNA(Glu) and tRNA(Gln). Catalyzes the conversion of 2-thiouridine (S2U-RNA) to 2-selenouridine (Se2U-RNA). Acts in a two-step process involving geranylation of 2-thiouridine (S2U) to S-geranyl-2-thiouridine (geS2U) and subsequent selenation of the latter derivative to 2-selenouridine (Se2U) in the tRNA chain. In Pseudomonas putida (strain ATCC 47054 / DSM 6125 / CFBP 8728 / NCIMB 11950 / KT2440), this protein is tRNA 2-selenouridine synthase.